Here is a 62-residue protein sequence, read N- to C-terminus: MRCLPVFIILLLLIASAPSFDALPKTEDNVPLSSFHDNLKRTRRIHLNIRECCSDGWCCPAG.

A signal peptide spans 1–19; sequence MRCLPVFIILLLLIASAPS. Positions 20 to 49 are excised as a propeptide; sequence FDALPKTEDNVPLSSFHDNLKRTRRIHLNI. Ala-61 is subject to Alanine amide.

This sequence belongs to the conotoxin T superfamily. Contains 2 disulfide bonds that can be either 'C1-C3, C2-C4' or 'C1-C4, C2-C3', since these disulfide connectivities have been observed for conotoxins with cysteine framework V (for examples, see AC P0DQQ7 and AC P81755). In terms of tissue distribution, expressed by the venom duct.

Its subcellular location is the secreted. The protein is Conotoxin Pn-B02 of Conus pennaceus (Feathered cone).